The sequence spans 198 residues: Synaptobrevin homolog YKT6-A (198 aa).

Residues 8 to 127 (VLYKGENKVH…IQYNALDSYL (120 aa)) form the Longin domain. A v-SNARE coiled-coil homology domain is found at 138 to 198 (PMSKVQAELD…RKQNSCCDIM (61 aa)). Cys194 is lipidated: S-palmitoyl cysteine. Residue Cys195 is modified to Cysteine methyl ester. Cys195 carries the S-farnesyl cysteine lipid modification. Positions 196 to 198 (DIM) are cleaved as a propeptide — removed in mature form.

Belongs to the synaptobrevin family. Palmitoylated; catalyzes its own palmitoylation. Palmitoylation is required for Golgi targeting. In terms of processing, farnesylation is required for Golgi targeting.

It is found in the cytoplasm. The protein localises to the cytosol. Its subcellular location is the cytoplasmic vesicle membrane. It localises to the golgi apparatus membrane. In terms of biological role, vesicular soluble NSF attachment protein receptor (v-SNARE) mediating vesicle docking and fusion to a specific acceptor cellular compartment. Functions in endoplasmic reticulum to Golgi transport; as part of a SNARE complex composed of GOSR1, GOSR2 and STX5. Functions in early/recycling endosome to TGN transport; as part of a SNARE complex composed of BET1L, GOSR1 and STX5. Has a S-palmitoyl transferase activity. This is Synaptobrevin homolog YKT6-A (ykt6-a) from Xenopus laevis (African clawed frog).